Reading from the N-terminus, the 227-residue chain is Protein MobD (227 aa).

This is Protein MobD (mobD) from Acidithiobacillus ferrooxidans (Thiobacillus ferrooxidans).